The chain runs to 696 residues: MTRTALVTTALPYANGPLHLGHLVGYIQADIWVRARRLRGDKTWFVCADDTHGTPIMLAAEKAGVTPEAFIANIQASHERDFAAFGVTFDHYDSTNSPVNRELTEAFYTKLEAAGHISRRSVAQFYDPAKGMFLPDRYIKGICPNCGSADQYGDNCEVCGATYAPTELKEPKSVISGATPELRDSEHFFFEVGHFDGFLREWLDGDVALPGVKAKLKEWLDAEGGLRAWDISRDAPYFGFQIPGQPGKYFYVWLDAPIGYLCSFKTLCAQMGEDFQAHLAAGTQTELHHFIGKDIVNFHGLFWPAVLHGTGHRAPTRLHVNGYLMVDGAKMSKSRGTFVMARTFLDVGLEPEALRYYFAAKSSGGVDDLDLNLGDFVARVNADLVGKFVNLASRCAGFIGKRFDGKLADALPDPAQYARFVEALAPIREAYERNDPASAIRQTMALADEANKYIDDTKPWVIAKQEGADAQLQSVCTQGLNLFRLLVAALKPILPRTAAEAEAFLSAPMTSWEDVSRPLTCHVIQPYTALFTRIDPKLIDAMTDASKDTMAAPAAPAATTASAEKVAKIDAKAATPANPPASVANPGLIGMDDFAKLDLRIGKVLVCEAVEGSDKLLRFELDAGELGKRQIFSGIRASYGEPETLVGRSVVFIANLAPRKMRFGISEGMILSAGFDGGALALLDADAGAQPGMPVR.

The short motif at 12–22 (PYANGPLHLGH) is the 'HIGH' region element. Residues Cys-143, Cys-146, Cys-156, and Cys-159 each contribute to the Zn(2+) site. The short motif at 330–334 (KMSKS) is the 'KMSKS' region element. Position 333 (Lys-333) interacts with ATP. The tRNA-binding domain maps to 593–696 (DFAKLDLRIG…AGAQPGMPVR (104 aa)).

This sequence belongs to the class-I aminoacyl-tRNA synthetase family. MetG type 1 subfamily. As to quaternary structure, homodimer. Requires Zn(2+) as cofactor.

It is found in the cytoplasm. It carries out the reaction tRNA(Met) + L-methionine + ATP = L-methionyl-tRNA(Met) + AMP + diphosphate. Is required not only for elongation of protein synthesis but also for the initiation of all mRNA translation through initiator tRNA(fMet) aminoacylation. The protein is Methionine--tRNA ligase of Xanthomonas campestris pv. campestris (strain 8004).